The chain runs to 1179 residues: MVYSDTKTSKKIKKYKINIMKKKLNIFQIPLKGIHLIEASAGTGKTSTIAFLYLRLLLGLEKNKENIRKLSVKEILVVTFTNAAKEELYIRIKKSIKELHLSCIKKKSKDPIFQSFLTKIKNFDEAIHILEDAKININNAAIYTIHGFCQDVLENNTLISNREIIENESFLYLQATQDFWRYFFYNLPKKIIKIIYEEYRSPEDLLREIKPILKVNSSINFKKKFDKKETLITFHEKIINKINIFKQKWLNYNLIILKIINQLKVNKKIYSNFNILKWKKKITEWAESETKNYKMPICLKYFSETSIEKNIKNYNFKKHIFFEEIDKILKKNFSLKNIILFYAIKNIPKFVKREKEKKLLLGFNDLLKILLKNIKKEESLREIIIKQYPVALIDEFQDTNIQQYQIFNTLYKNKKTALFLVGDPKQSIYSFRGADIFSYLHAKFKIKNYYYLDTNWRSSKNICKAINYLFSKNKNPFYFKNIPFEPILSSSKNLNMKFKIKEKNQTAISFFFQKKEEVNIEEYRDWIAKQCANEISYWLTCSKKGEAIISDGSQERILTEKDIVILVRNRTEAQIIKESLKKVNILSKYSSPYESVFKTFDALELLSILKSILDPTDINLLKKSILTHILNKIAFQKIKENSKTKISHFLIQKLYEYNDKWKTIGIFYTIKTMILEYQKYANNFEMYKNQQRNINFLHIAELLQEKSQNCYKENSLMRWFEKKILEKNNISENEYIKNFAESKIIRIITIHKSKGLEYPIVWIPFIVDFNVSKSYFYHEKKTLKIFFDNNKSSETLKKSDEERLAEDLRFLYVALTRSIYHCSIGISYLVKKRKKNKKSSDIHKSSLGYIIQNGKCMNYKELLYELKILNKKLYIEVKYQAMNCKSLTIKKDDLYILSQPQFLLKEIKLYSQITSFTKIKQENKHFNNIQYNNIESYFFKEKDKKKTIHNFPHGNKAGIFIHYILKTIKFNNTFNIDWFYTILKKYEFSEKWAKTLMFWINNILNFKINNLNITLSSLKKTQYIKELEFFLPIKNTLYCEDLNQIIQSIDLISSISQKIFFNPVIGILKGFIDLVFIFNKKYYILDYKCNYLGNNDNCYSSKNIKKEIIKNRYDIQYQLYTLALHQYLKKKVKQYHYKTHFGGVFYLFLRGINVKDSIFYILPDYLLIKKLTKLILQKK.

A DNA-binding and helicase activity, interacts with RecC region spans residues 1–859; that stretch reads MVYSDTKTSK…IIQNGKCMNY (859 aa). In terms of domain architecture, UvrD-like helicase ATP-binding spans 18–459; sequence NIMKKKLNIF…YYLDTNWRSS (442 aa). An ATP-binding site is contributed by 39–46; the sequence is ASAGTGKT. A UvrD-like helicase C-terminal domain is found at 485-755; sequence EPILSSSKNL…RIITIHKSKG (271 aa). Positions 910–1179 are nuclease activity, interacts with RecD and RecA; it reads YSQITSFTKI…KLTKLILQKK (270 aa). Residues His962, Asp1073, and Asp1086 each contribute to the Mg(2+) site. Asp1086 serves as the catalytic For nuclease activity.

Belongs to the helicase family. UvrD subfamily. In terms of assembly, heterotrimer of RecB, RecC and RecD. All subunits contribute to DNA-binding. Interacts with RecA. It depends on Mg(2+) as a cofactor.

It carries out the reaction Exonucleolytic cleavage (in the presence of ATP) in either 5'- to 3'- or 3'- to 5'-direction to yield 5'-phosphooligonucleotides.. The enzyme catalyses Couples ATP hydrolysis with the unwinding of duplex DNA by translocating in the 3'-5' direction.. It catalyses the reaction ATP + H2O = ADP + phosphate + H(+). A helicase/nuclease that prepares dsDNA breaks (DSB) for recombinational DNA repair. Binds to DSBs and unwinds DNA via a highly rapid and processive ATP-dependent bidirectional helicase activity. Unwinds dsDNA until it encounters a Chi (crossover hotspot instigator) sequence from the 3' direction. Cuts ssDNA a few nucleotides 3' to the Chi site. The properties and activities of the enzyme are changed at Chi. The Chi-altered holoenzyme produces a long 3'-ssDNA overhang and facilitates RecA-binding to the ssDNA for homologous DNA recombination and repair. Holoenzyme degrades any linearized DNA that is unable to undergo homologous recombination. In the holoenzyme this subunit contributes ATPase, 3'-5' helicase, exonuclease activity and loads RecA onto ssDNA. This Buchnera aphidicola subsp. Schizaphis graminum (strain Sg) protein is RecBCD enzyme subunit RecB.